The chain runs to 184 residues: Flavodoxin FldP (184 aa).

The Flavodoxin-like domain maps to alanine 4–alanine 176. FMN-binding positions include serine 10–histidine 14 and glycine 91–alanine 147.

The protein belongs to the FldP flavodoxin family. It depends on FMN as a cofactor.

In terms of biological role, flavodoxins are low-potential electron donors to a number of redox enzymes. FldP protects the cell from oxidative stress and reactive oxygen species (ROS) damage, thereby expanding the capabilities of P.aeruginosa to thrive in hostile environments, and contributes to bacterial survival within the host. In vitro, is able to mediate ferredoxin-NADP(H) reductase (FNR)-driven cytochrome c reduction. In Pseudomonas aeruginosa (strain UCBPP-PA14), this protein is Flavodoxin FldP.